Here is a 285-residue protein sequence, read N- to C-terminus: Probable endonuclease 4 (285 aa).

H69, H109, E145, D179, H182, H216, D229, H231, and E261 together coordinate Zn(2+).

This sequence belongs to the AP endonuclease 2 family. The cofactor is Zn(2+).

The enzyme catalyses Endonucleolytic cleavage to 5'-phosphooligonucleotide end-products.. In terms of biological role, endonuclease IV plays a role in DNA repair. It cleaves phosphodiester bonds at apurinic or apyrimidinic (AP) sites, generating a 3'-hydroxyl group and a 5'-terminal sugar phosphate. In Salmonella agona (strain SL483), this protein is Probable endonuclease 4.